The primary structure comprises 367 residues: 3-dehydroquinate synthase (367 aa).

NAD(+) contacts are provided by residues 99-103 (GVVGD), 123-124 (TT), Lys136, Lys145, and 163-166 (FLRT). Residues Glu178, His242, and His259 each contribute to the Zn(2+) site.

This sequence belongs to the sugar phosphate cyclases superfamily. Dehydroquinate synthase family. It depends on Co(2+) as a cofactor. The cofactor is Zn(2+). NAD(+) is required as a cofactor.

Its subcellular location is the cytoplasm. It catalyses the reaction 7-phospho-2-dehydro-3-deoxy-D-arabino-heptonate = 3-dehydroquinate + phosphate. Its pathway is metabolic intermediate biosynthesis; chorismate biosynthesis; chorismate from D-erythrose 4-phosphate and phosphoenolpyruvate: step 2/7. Catalyzes the conversion of 3-deoxy-D-arabino-heptulosonate 7-phosphate (DAHP) to dehydroquinate (DHQ). This is 3-dehydroquinate synthase from Chlorobaculum parvum (strain DSM 263 / NCIMB 8327) (Chlorobium vibrioforme subsp. thiosulfatophilum).